A 184-amino-acid chain; its full sequence is Large ribosomal subunit protein uL6 (184 aa).

This sequence belongs to the universal ribosomal protein uL6 family. Part of the 50S ribosomal subunit.

Functionally, this protein binds to the 23S rRNA, and is important in its secondary structure. It is located near the subunit interface in the base of the L7/L12 stalk, and near the tRNA binding site of the peptidyltransferase center. The polypeptide is Large ribosomal subunit protein uL6 (Pseudothermotoga lettingae (strain ATCC BAA-301 / DSM 14385 / NBRC 107922 / TMO) (Thermotoga lettingae)).